A 1058-amino-acid polypeptide reads, in one-letter code: Carbamoyl phosphate synthase large chain (1058 aa).

A carboxyphosphate synthetic domain region spans residues 1–401 (MPKRKDIQKI…SLLKACRSLE (401 aa)). ATP contacts are provided by arginine 129, arginine 169, glycine 175, glycine 176, arginine 208, isoleucine 210, glutamate 215, glycine 241, isoleucine 242, histidine 243, glutamine 284, and glutamate 298. The region spanning 133–327 (KQLMQELDQP…IAKLAAKIAV (195 aa)) is the ATP-grasp 1 domain. The Mg(2+) site is built by glutamine 284, glutamate 298, and asparagine 300. Residues glutamine 284, glutamate 298, and asparagine 300 each coordinate Mn(2+). The oligomerization domain stretch occupies residues 402–546 (IGVCHNEMTS…YSTYELENES (145 aa)). A carbamoyl phosphate synthetic domain region spans residues 547-929 (VQSNKESILV…ALYKAFEANN (383 aa)). Residues 671–861 (EKALKELGIP…MAQIATKLIL (191 aa)) form the ATP-grasp 2 domain. Arginine 707, serine 746, isoleucine 748, glutamate 752, glycine 777, valine 778, histidine 779, serine 780, glutamine 820, and glutamate 832 together coordinate ATP. Glutamine 820, glutamate 832, and asparagine 834 together coordinate Mg(2+). Glutamine 820, glutamate 832, and asparagine 834 together coordinate Mn(2+). Residues 930-1058 (SHLSEFGQIV…ESRCFNIEAI (129 aa)) form the MGS-like domain. The tract at residues 930-1058 (SHLSEFGQIV…ESRCFNIEAI (129 aa)) is allosteric domain.

This sequence belongs to the CarB family. As to quaternary structure, composed of two chains; the small (or glutamine) chain promotes the hydrolysis of glutamine to ammonia, which is used by the large (or ammonia) chain to synthesize carbamoyl phosphate. Tetramer of heterodimers (alpha,beta)4. It depends on Mg(2+) as a cofactor. Mn(2+) serves as cofactor.

It catalyses the reaction hydrogencarbonate + L-glutamine + 2 ATP + H2O = carbamoyl phosphate + L-glutamate + 2 ADP + phosphate + 2 H(+). The enzyme catalyses hydrogencarbonate + NH4(+) + 2 ATP = carbamoyl phosphate + 2 ADP + phosphate + 2 H(+). The protein operates within amino-acid biosynthesis; L-arginine biosynthesis; carbamoyl phosphate from bicarbonate: step 1/1. Its pathway is pyrimidine metabolism; UMP biosynthesis via de novo pathway; (S)-dihydroorotate from bicarbonate: step 1/3. Its function is as follows. Large subunit of the glutamine-dependent carbamoyl phosphate synthetase (CPSase). CPSase catalyzes the formation of carbamoyl phosphate from the ammonia moiety of glutamine, carbonate, and phosphate donated by ATP, constituting the first step of 2 biosynthetic pathways, one leading to arginine and/or urea and the other to pyrimidine nucleotides. The large subunit (synthetase) binds the substrates ammonia (free or transferred from glutamine from the small subunit), hydrogencarbonate and ATP and carries out an ATP-coupled ligase reaction, activating hydrogencarbonate by forming carboxy phosphate which reacts with ammonia to form carbamoyl phosphate. This is Carbamoyl phosphate synthase large chain from Streptococcus pyogenes serotype M3 (strain SSI-1).